Reading from the N-terminus, the 559-residue chain is Proton-coupled zinc antiporter SLC30A9, mitochondrial (559 aa).

The interval 58–96 (SSDQKEDGGSKGTSAASSPEKSMAGLDPSKPEQKSTFPP) is disordered. Helical transmembrane passes span 230 to 250 (VVIVAICINGLNFFFKLLAWV), 305 to 325 (GVGIFMMGAGLSWYHGIIGLL), 333 to 353 (LLWAYCILAGSLVSEGATLLV), 389 to 409 (AAAVLGLVMAASCMGLTSLTG), and 415 to 435 (SLGSLGVGTLLGAVSAFLIYT). The LXXLL motif motif lies at 453 to 457 (LTELL).

This sequence belongs to the cation diffusion facilitator (CDF) transporter (TC 2.A.4) family. SLC30A subfamily.

The protein localises to the mitochondrion membrane. It localises to the nucleus. It is found in the endoplasmic reticulum. The enzyme catalyses Zn(2+)(in) + 2 H(+)(out) = Zn(2+)(out) + 2 H(+)(in). Its function is as follows. Mitochondrial proton-coupled zinc ion antiporter mediating the export of zinc from the mitochondria and involved in zinc homeostasis, zinc mobilization as well as mitochondrial morphology and health. In nucleus, may function as a secondary coactivator for nuclear receptors. The protein is Proton-coupled zinc antiporter SLC30A9, mitochondrial (slc30a9) of Xenopus laevis (African clawed frog).